The primary structure comprises 401 residues: 8-amino-7-oxononanoate synthase (401 aa).

Residue arginine 24 participates in substrate binding. A pyridoxal 5'-phosphate-binding site is contributed by 111 to 112 (GF). Substrate is bound at residue histidine 137. Serine 183, histidine 211, and threonine 240 together coordinate pyridoxal 5'-phosphate. Lysine 243 is subject to N6-(pyridoxal phosphate)lysine. Substrate is bound at residue threonine 357.

This sequence belongs to the class-II pyridoxal-phosphate-dependent aminotransferase family. BioF subfamily. Homodimer. Pyridoxal 5'-phosphate serves as cofactor.

The catalysed reaction is 6-carboxyhexanoyl-[ACP] + L-alanine + H(+) = (8S)-8-amino-7-oxononanoate + holo-[ACP] + CO2. Its pathway is cofactor biosynthesis; biotin biosynthesis. Its function is as follows. Catalyzes the decarboxylative condensation of pimeloyl-[acyl-carrier protein] and L-alanine to produce 8-amino-7-oxononanoate (AON), [acyl-carrier protein], and carbon dioxide. This chain is 8-amino-7-oxononanoate synthase, found in Xylella fastidiosa (strain 9a5c).